Reading from the N-terminus, the 511-residue chain is UDP-N-acetylmuramate--L-alanine ligase (511 aa).

127–133 contributes to the ATP binding site; the sequence is GTHGKTT. Residues 481 to 511 are disordered; it reads VGTVPGGEVGGATTIGGTVPGGSAPGASAAG. Gly residues predominate over residues 484 to 504; that stretch reads VPGGEVGGATTIGGTVPGGSA.

Belongs to the MurCDEF family.

Its subcellular location is the cytoplasm. The catalysed reaction is UDP-N-acetyl-alpha-D-muramate + L-alanine + ATP = UDP-N-acetyl-alpha-D-muramoyl-L-alanine + ADP + phosphate + H(+). The protein operates within cell wall biogenesis; peptidoglycan biosynthesis. Cell wall formation. The sequence is that of UDP-N-acetylmuramate--L-alanine ligase from Salinispora arenicola (strain CNS-205).